The following is a 433-amino-acid chain: MEAVYLVVNGLGLVLDVLTLVLDLNFLLVSSLLASLAWLLAFVYNLPHTVLTSLLHLGRGVLLSLLALIEAVVRFTCGGLQALCTLLYSCCSGLESLKLLGHLASHGALRSREILHRGVLNVVSSGHALLRQACDICAIAMSLVAYVINSLVNICLIGTQNLFSLVLALWDAVTGPLWRMTDVVAAFLAHISSSAVAMAILLWTPCQLALELLASAARLLASFVLVNLTGLVLLACVLAVTVTVLHPDFTLRLATQALSQLHARPSYHRLREDVMRLSRLALGSEAWRRVWSRSLQLASWPNRGGAPGAPQGDPMRVFSVRTRRQDTLPEAGRRSEAEEEEARTIRVTPVRGRERLNEEEPPGGQDPWKLLKEQEERKKCVICQDQSKTVLLLPCRHLCLCQACTEILMRHPVYHRNCPLCRRGILQTLNVYL.

5 consecutive transmembrane segments (helical) span residues 24–44 (LNFLLVSSLLASLAWLLAFVY), 60–80 (GVLLSLLALIEAVVRFTCGGL), 147–169 (VINSLVNICLIGTQNLFSLVLAL), 183–203 (VVAAFLAHISSSAVAMAILLW), and 220–240 (LASFVLVNLTGLVLLACVLAV). The RING-type zinc finger occupies 380 to 422 (CVICQDQSKTVLLLPCRHLCLCQACTEILMRHPVYHRNCPLCR).

Interacts with INCA1. Interacts with TMEM43, ENDOD1, TMEM33 and TMED1 to form a complex capable of modulating innate immune signaling through the cGAS-STING pathway. Interacts with UBE2J1; this interaction is important for SQSTM1 ubiquitination. As to expression, ubiquitous. Up-regulated in several cancer cell lines.

Its subcellular location is the endoplasmic reticulum membrane. The enzyme catalyses S-ubiquitinyl-[E2 ubiquitin-conjugating enzyme]-L-cysteine + [acceptor protein]-L-lysine = [E2 ubiquitin-conjugating enzyme]-L-cysteine + N(6)-ubiquitinyl-[acceptor protein]-L-lysine.. The protein operates within protein modification; protein ubiquitination. Functionally, E3 ubiquitin-protein ligase that plays a key role in endosome organization by retaining vesicles in the perinuclear cloud. Acts as a platform for perinuclear positioning of the endosomal system by mediating ubiquitination of SQSTM1 through interaction with the ubiquitin conjugating enzyme UBE2J1. Ubiquitinated SQSTM1 attracts specific vesicle-associated adapters, forming a molecular bridge that restrains cognate vesicles in the perinuclear region and organizes the endosomal pathway for efficient cargo transport. Also acts as a regulator of type I interferon production in response to viral infection by mediating the formation of 'Lys-11'-linked polyubiquitin chains on TMEM173/STING, leading to stabilize TMEM173/STING. Also required to limit type I interferon response by promoting autophagic degradation of IRF3. The sequence is that of E3 ubiquitin-protein ligase RNF26 from Homo sapiens (Human).